We begin with the raw amino-acid sequence, 355 residues long: uncharacterized protein (355 aa).

The segment at 1-61 (MNKKIEKNNN…PKRRGRRPKK (61 aa)) is disordered. Residues 18–37 (YESNTTDNQLIMKKNANSGS) are compositionally biased toward polar residues.

This is an uncharacterized protein from Acanthamoeba polyphaga mimivirus (APMV).